Here is a 431-residue protein sequence, read N- to C-terminus: Tol-Pal system protein TolB (431 aa).

An N-terminal signal peptide occupies residues 1-18; that stretch reads MKALLLSLLLLLPVVALA. Positions 410–431 are disordered; sequence LPLRTEKGTYQTPDWSPLPQAQ.

This sequence belongs to the TolB family. As to quaternary structure, the Tol-Pal system is composed of five core proteins: the inner membrane proteins TolA, TolQ and TolR, the periplasmic protein TolB and the outer membrane protein Pal. They form a network linking the inner and outer membranes and the peptidoglycan layer.

It is found in the periplasm. Functionally, part of the Tol-Pal system, which plays a role in outer membrane invagination during cell division and is important for maintaining outer membrane integrity. The sequence is that of Tol-Pal system protein TolB from Myxococcus xanthus.